The sequence spans 366 residues: Sulfate/thiosulfate import ATP-binding protein CysA 2 (366 aa).

The ABC transporter domain maps to leucine 14 to valine 243. An ATP-binding site is contributed by glycine 46–threonine 53.

The protein belongs to the ABC transporter superfamily. Sulfate/tungstate importer (TC 3.A.1.6) family. As to quaternary structure, the complex is composed of two ATP-binding proteins (CysA), two transmembrane proteins (CysT and CysW) and a solute-binding protein (CysP).

It is found in the cell inner membrane. It carries out the reaction sulfate(out) + ATP + H2O = sulfate(in) + ADP + phosphate + H(+). The enzyme catalyses thiosulfate(out) + ATP + H2O = thiosulfate(in) + ADP + phosphate + H(+). Its function is as follows. Part of the ABC transporter complex CysAWTP involved in sulfate/thiosulfate import. Responsible for energy coupling to the transport system. This chain is Sulfate/thiosulfate import ATP-binding protein CysA 2, found in Chromobacterium violaceum (strain ATCC 12472 / DSM 30191 / JCM 1249 / CCUG 213 / NBRC 12614 / NCIMB 9131 / NCTC 9757 / MK).